Consider the following 650-residue polypeptide: Transcription factor LHW (650 aa).

Disordered stretches follow at residues 381-417 (LTKV…SSVY) and 431-470 (LKRE…DRQM). Over residues 384–397 (VSNSSVTTPSHSSP) the composition is skewed to low complexity. The Nuclear localization signal motif lies at 451 to 458 (NRKRLKPG). The bHLH domain maps to 455–504 (LKPGENPRPRPKDRQMIQDRVKELREIIPNGAKCSIDALLERTIKHMLFL). The segment covering 456–470 (KPGENPRPRPKDRQM) has biased composition (basic and acidic residues).

Belongs to the bHLH protein family. LHW subfamily. As to quaternary structure, homodimer. Can also interact with bHLH proteins. In terms of tissue distribution, expressed in both root and shoot meristems. Present in root tips.

It is found in the nucleus. In terms of biological role, transcription activator that regulates root development; promotes the production of stele cells in roots. Coordinately controls the number of all vascular cell types by regulating the size of the pool of cells from which they arise. The chain is Transcription factor LHW (LHW) from Arabidopsis thaliana (Mouse-ear cress).